A 148-amino-acid polypeptide reads, in one-letter code: uncharacterized protein (148 aa).

A helical transmembrane segment spans residues Met7 to Leu29.

It is found in the membrane. This is an uncharacterized protein from Bacillus subtilis (strain 168).